Reading from the N-terminus, the 341-residue chain is Phospholipid phosphatase homolog 1.2 homolog (341 aa).

Transmembrane regions (helical) follow at residues 30-50 (LFIFFLATAAVTVIVPTLLGV), 71-91 (ITAVQLMLYNLVLNAATVLFV), and 122-142 (LLTYFGYSQIGFVMNIALNIV). Asn162 carries N-linked (GlcNAc...) asparagine glycosylation. 2 helical membrane passes run 223–243 (RIVVPISQTLMFMIGLGISFS) and 257–277 (VGIFIGIFLAVYTCTFWTDLF). Disordered regions lie at residues 284 to 308 (SETQPLLLPRPPRTPRNSEDEERHR) and 322 to 341 (FEATGPQDSDTILLPVPQSA). A compositionally biased stretch (basic and acidic residues) spans 299–308 (RNSEDEERHR).

Belongs to the PA-phosphatase related phosphoesterase family.

Its subcellular location is the membrane. In Caenorhabditis elegans, this protein is Phospholipid phosphatase homolog 1.2 homolog.